Consider the following 122-residue polypeptide: Large ribosomal subunit protein uL14 (122 aa).

It belongs to the universal ribosomal protein uL14 family. Part of the 50S ribosomal subunit. Forms a cluster with proteins L3 and L19. In the 70S ribosome, L14 and L19 interact and together make contacts with the 16S rRNA in bridges B5 and B8.

In terms of biological role, binds to 23S rRNA. Forms part of two intersubunit bridges in the 70S ribosome. The protein is Large ribosomal subunit protein uL14 of Lacticaseibacillus casei (strain BL23) (Lactobacillus casei).